The primary structure comprises 346 residues: Mitogen-activated protein kinase kinase 1c (346 aa).

A Protein kinase domain is found at 70-332 (LELVRFLGKG…TTDLLKHPFL (263 aa)). Residues 76-84 (LGKGAGGTV) and Lys99 each bind ATP. Asp194 acts as the Proton acceptor in catalysis.

It belongs to the protein kinase superfamily. STE Ser/Thr protein kinase family. MAP kinase kinase subfamily.

It carries out the reaction L-seryl-[protein] + ATP = O-phospho-L-seryl-[protein] + ADP + H(+). It catalyses the reaction L-threonyl-[protein] + ATP = O-phospho-L-threonyl-[protein] + ADP + H(+). The catalysed reaction is L-tyrosyl-[protein] + ATP = O-phospho-L-tyrosyl-[protein] + ADP + H(+). Functionally, the CERK1, MEKK1a/b, MKK1a/b/c and MPK4a/b proteins are involved in pathogen defense. The pathway induces rapid growth inhibition, cell wall depositions and accumulation of defense-related transcripts. This protein is required for full defense response to fungal pathogen chitin. The sequence is that of Mitogen-activated protein kinase kinase 1c from Physcomitrium patens (Spreading-leaved earth moss).